The primary structure comprises 158 residues: Putative ribonucleoside-diphosphate reductase small chain B (158 aa).

The protein belongs to the ribonucleoside diphosphate reductase small chain family.

The sequence is that of Putative ribonucleoside-diphosphate reductase small chain B (RNR2B) from Arabidopsis thaliana (Mouse-ear cress).